A 121-amino-acid chain; its full sequence is Large ribosomal subunit protein bL12 (121 aa).

Belongs to the bacterial ribosomal protein bL12 family. In terms of assembly, homodimer. Part of the ribosomal stalk of the 50S ribosomal subunit. Forms a multimeric L10(L12)X complex, where L10 forms an elongated spine to which 2 to 4 L12 dimers bind in a sequential fashion. Binds GTP-bound translation factors.

Functionally, forms part of the ribosomal stalk which helps the ribosome interact with GTP-bound translation factors. Is thus essential for accurate translation. This Macrococcus caseolyticus (strain JCSC5402) (Macrococcoides caseolyticum) protein is Large ribosomal subunit protein bL12.